The following is a 382-amino-acid chain: Glycerate kinase (382 aa).

This sequence belongs to the glycerate kinase type-1 family.

The enzyme catalyses (R)-glycerate + ATP = (2R)-3-phosphoglycerate + ADP + H(+). In Bacillus subtilis (strain 168), this protein is Glycerate kinase (glxK).